Reading from the N-terminus, the 332-residue chain is MSGQHQITEQSSRNPLSRVSTLLPEKPLSPTSTYAGTQKHPEAPRQSSFLIQLQNIRNAIRKPMAEFFGVALLIIFGAGSACQVVLSTNPDVASSARGSFLSINFGWAIGIAMGVWVSGGISGGHINPAITIAMATYRGFPWRKVPSYILAQVLGGVVGAGLVYANYIHAIDIFEGGHHIRTQATASLFATYALPYMTQASCFFSEFLATAVLSMMVFALTDKRNHSPTNGLLPFALFILFVGLGASLGMETAYALNPARDFGPRLFLAMAGYGKALFNYRSQYWLWAPIIAPVLGAQAGGLLYDTFLNDGDNSPIKWRCASSQEHQLAEVV.

Polar residues predominate over residues 1–20 (MSGQHQITEQSSRNPLSRVS). A disordered region spans residues 1-45 (MSGQHQITEQSSRNPLSRVSTLLPEKPLSPTSTYAGTQKHPEAPR). Over 1 to 66 (MSGQHQITEQ…RNAIRKPMAE (66 aa)) the chain is Cytoplasmic. A helical membrane pass occupies residues 67 to 87 (FFGVALLIIFGAGSACQVVLS). At 88–100 (TNPDVASSARGSF) the chain is on the extracellular side. A helical transmembrane segment spans residues 101-121 (LSINFGWAIGIAMGVWVSGGI). Topologically, residues 122-144 (SGGHINPAITIAMATYRGFPWRK) are cytoplasmic. An NPA 1 motif is present at residues 127–129 (NPA). The chain crosses the membrane as a helical span at residues 145–165 (VPSYILAQVLGGVVGAGLVYA). The Extracellular segment spans residues 166–199 (NYIHAIDIFEGGHHIRTQATASLFATYALPYMTQ). Residues 200–220 (ASCFFSEFLATAVLSMMVFAL) traverse the membrane as a helical segment. The Cytoplasmic portion of the chain corresponds to 221–230 (TDKRNHSPTN). The chain crosses the membrane as a helical span at residues 231-251 (GLLPFALFILFVGLGASLGME). Over 252–283 (TAYALNPARDFGPRLFLAMAGYGKALFNYRSQ) the chain is Extracellular. The short motif at 257-259 (NPA) is the NPA 2 element. The chain crosses the membrane as a helical span at residues 284–304 (YWLWAPIIAPVLGAQAGGLLY). Topologically, residues 305–332 (DTFLNDGDNSPIKWRCASSQEHQLAEVV) are cytoplasmic.

This sequence belongs to the MIP/aquaporin (TC 1.A.8) family.

The protein resides in the membrane. It catalyses the reaction H2O(in) = H2O(out). The catalysed reaction is NH4(+)(in) = NH4(+)(out). In terms of biological role, water channel required to facilitate the transport of water across membranes. Acts as the most efficient Laccaria water channel. In addition to water, also shows strong ammonium transport activity. May be involved in fungal nitrogen (ammonium) support of the plant host in symbiosis. The sequence is that of Aquaporin Lacbi1:317173 from Laccaria bicolor (strain S238N-H82 / ATCC MYA-4686) (Bicoloured deceiver).